Consider the following 709-residue polypeptide: MAQEVLKDLNKVRNIGIMAHIDAGKTTTTERILFYTGINRKVGETHDGGATTDWMEQEKERGITITSAAVTCFWDNNQVNIIDTPGHVDFTVEVERSLRVLDGAVAVFDGKEGVEPQSEQVWRQATKYDVPRICFVNKMDKLGADFYFTVGTIEDRLGAKPLVMQLPIGAEDNFDGVIDLLEMKALTWRGVTPIGTEATVEEIPAELADRAAEYREKLLETVAESDEELMEKYFGGEELSIAEIKAAIRKMVVNSEIYPVYCGTAYKNKGVQPLLDAVVDFLPSPLDLGETKGTDVKDPEKVLTRKPSDEEPLSALAFKIAAHPFFGKLTFVRLYSGKVEPGEQVLNSTKNKKERIGKLFQMHANKENPVEVAHAGNIYAFIGLKDTTTGDTLCDANAPIILESMDFPDPVIKVAIEPKTKSDQEKLGVAIQKLAEEDPTFTVELDDESGQTVIGGMGELHLDVLVDRMKREFKVEANIGDPQVAYRETIRKPVESLSYTHKKQTGGSGQFAKVIITIEPYAPAPEELEEGESAIYKFENAVTGGRVPREYIPSVDAGIQDAMQYGFLAGYPLVNVKATLEDGAYHDVDSSEMAFKLAGSQAFKEAVAKAKPVLLEPIMSVEITTPEEYMGEVIGDVNARRGQIASMDDRAGAKIVKAKVPLSQMFGYVGDLRSKTQGRANYSMIFDSYAEVPANVAADVIAERNGTAS.

The tr-type G domain maps to N10–L286. GTP-binding positions include A19–T26, D83–H87, and N137–D140.

This sequence belongs to the TRAFAC class translation factor GTPase superfamily. Classic translation factor GTPase family. EF-G/EF-2 subfamily.

The protein resides in the cytoplasm. Functionally, catalyzes the GTP-dependent ribosomal translocation step during translation elongation. During this step, the ribosome changes from the pre-translocational (PRE) to the post-translocational (POST) state as the newly formed A-site-bound peptidyl-tRNA and P-site-bound deacylated tRNA move to the P and E sites, respectively. Catalyzes the coordinated movement of the two tRNA molecules, the mRNA and conformational changes in the ribosome. This is Elongation factor G from Corynebacterium glutamicum (strain R).